A 572-amino-acid chain; its full sequence is Vacuolar protein sorting-associated protein vps901 (572 aa).

Basic and acidic residues-rich tracts occupy residues 1-31 and 39-53; these read MDYP…EKPL and DEQR…KNHD. The tract at residues 1-108 is disordered; that stretch reads MDYPSFHEDP…HENNPGQQEI (108 aa). Residues 69 to 80 are compositionally biased toward polar residues; that stretch reads QYEQTDSSSDQE. Basic and acidic residues predominate over residues 82 to 98; sequence MNEKQSLDKENRNDNIP. Residues 219-357 form the VPS9 domain; that stretch reads VEEDRVLSEK…IETLDCSSLT (139 aa). Residues 430 to 502 form a disordered region; that stretch reads QIDTPESKEY…IVHEEQPVDD (73 aa). Over residues 445–457 the composition is skewed to polar residues; that stretch reads PRGSSHSGSFTTD. The CUE domain occupies 529–571; that stretch reads REKAEAITALRAMFPAFDSEVIEVVLNAQQGRLSSSIDSLLEM.

In terms of biological role, required for vacuolar protein sorting; may be required for the consumption of transport vesicles containing vacuolar protein precursors. Required for vacuolar fusion. This Schizosaccharomyces pombe (strain 972 / ATCC 24843) (Fission yeast) protein is Vacuolar protein sorting-associated protein vps901 (vps901).